We begin with the raw amino-acid sequence, 431 residues long: Adenylosuccinate synthetase (431 aa).

GTP is bound by residues 12–18 and 40–42; these read GDEGKGK and GHT. Aspartate 13 (proton acceptor) is an active-site residue. Mg(2+) is bound by residues aspartate 13 and glycine 40. IMP contacts are provided by residues 13–16, 38–41, threonine 129, arginine 143, glutamine 224, threonine 239, and arginine 303; these read DEGK and NAGH. The active-site Proton donor is histidine 41. 299 to 305 contributes to the substrate binding site; that stretch reads VTTGRAR. Residues arginine 305, 331–333, and 413–415 each bind GTP; these read KLD and GVG.

This sequence belongs to the adenylosuccinate synthetase family. Homodimer. Requires Mg(2+) as cofactor.

The protein localises to the cytoplasm. The catalysed reaction is IMP + L-aspartate + GTP = N(6)-(1,2-dicarboxyethyl)-AMP + GDP + phosphate + 2 H(+). It participates in purine metabolism; AMP biosynthesis via de novo pathway; AMP from IMP: step 1/2. Functionally, plays an important role in the de novo pathway of purine nucleotide biosynthesis. Catalyzes the first committed step in the biosynthesis of AMP from IMP. The chain is Adenylosuccinate synthetase from Mycolicibacterium vanbaalenii (strain DSM 7251 / JCM 13017 / BCRC 16820 / KCTC 9966 / NRRL B-24157 / PYR-1) (Mycobacterium vanbaalenii).